Reading from the N-terminus, the 160-residue chain is Coat protein TP3 (160 aa).

Its subcellular location is the virion. In Thermoproteus tenax (TTV1), this protein is Coat protein TP3.